The sequence spans 311 residues: Phosphopantothenate--cysteine ligase (311 aa).

A2 carries the N-acetylalanine modification.

The protein belongs to the PPC synthetase family. Homodimer.

The enzyme catalyses (R)-4'-phosphopantothenate + L-cysteine + ATP = N-[(R)-4-phosphopantothenoyl]-L-cysteine + AMP + diphosphate + H(+). The catalysed reaction is (R)-4'-phosphopantothenate + L-cysteine + CTP = N-[(R)-4-phosphopantothenoyl]-L-cysteine + CMP + diphosphate + H(+). The protein operates within cofactor biosynthesis; coenzyme A biosynthesis; CoA from (R)-pantothenate: step 2/5. In terms of biological role, catalyzes the second step in the biosynthesis of coenzyme A from vitamin B5, where cysteine is conjugated to 4'-phosphopantothenate to form 4-phosphopantothenoylcysteine. Has a preference for ATP over CTP as a cosubstrate. The polypeptide is Phosphopantothenate--cysteine ligase (PPCS) (Homo sapiens (Human)).